A 128-amino-acid chain; its full sequence is Small ribosomal subunit protein uS12 (128 aa).

A disordered region spans residues 1-24; sequence MPTFNQLVKYGREKRKKKSKAPAL. Residue aspartate 89 is modified to 3-methylthioaspartic acid. The tract at residues 105-128 is disordered; sequence AGVEGRRQSRSKYGTKRPKEEKGG.

It belongs to the universal ribosomal protein uS12 family. In terms of assembly, part of the 30S ribosomal subunit. Contacts proteins S8 and S17. May interact with IF1 in the 30S initiation complex.

Functionally, with S4 and S5 plays an important role in translational accuracy. In terms of biological role, interacts with and stabilizes bases of the 16S rRNA that are involved in tRNA selection in the A site and with the mRNA backbone. Located at the interface of the 30S and 50S subunits, it traverses the body of the 30S subunit contacting proteins on the other side and probably holding the rRNA structure together. The combined cluster of proteins S8, S12 and S17 appears to hold together the shoulder and platform of the 30S subunit. This Aquifex aeolicus (strain VF5) protein is Small ribosomal subunit protein uS12.